Reading from the N-terminus, the 342-residue chain is tRNA dimethylallyltransferase (342 aa).

39 to 46 serves as a coordination point for ATP; the sequence is GPTGSGKT. 41–46 serves as a coordination point for substrate; sequence TGSGKT. Residues 64–67 form an interaction with substrate tRNA region; that stretch reads DSMQ.

It belongs to the IPP transferase family. Monomer. The cofactor is Mg(2+).

The enzyme catalyses adenosine(37) in tRNA + dimethylallyl diphosphate = N(6)-dimethylallyladenosine(37) in tRNA + diphosphate. Functionally, catalyzes the transfer of a dimethylallyl group onto the adenine at position 37 in tRNAs that read codons beginning with uridine, leading to the formation of N6-(dimethylallyl)adenosine (i(6)A). In Chlamydia felis (strain Fe/C-56) (Chlamydophila felis), this protein is tRNA dimethylallyltransferase.